The sequence spans 112 residues: Large ribosomal subunit protein uL1 (112 aa).

This sequence belongs to the universal ribosomal protein uL1 family.

This Caenorhabditis remanei (Caenorhabditis vulgaris) protein is Large ribosomal subunit protein uL1 (rpl-10a).